We begin with the raw amino-acid sequence, 137 residues long: Insulin-like peptide 2 (137 aa).

Positions 1–26 (MSKPLSFISMVAVILLASSTVKLAQG) are cleaved as a signal peptide. Disulfide bonds link Cys29–Cys119, Cys41–Cys132, and Cys118–Cys123. A propeptide spans 53-104 (AMPGADSDLDALNPLQFVQEFEEEDNSISEPLRSALFPGSYLGGVLNSLAEV) (connecting peptide).

It belongs to the insulin family. In terms of assembly, heterodimer of a B chain and an A chain linked by two disulfide bonds. In terms of tissue distribution, broadly expressed at a low level in the embryonic mesoderm, beginning at stage 12. Expressed at a high level in the embryonic anterior midgut, with expression diminishing at late stage 16. Expressed at a low level in larval imaginal disks. Expressed at a high level in larval salivary glands and in seven cells of each larval brain hemisphere that may correspond to neurosecretory cells.

It is found in the secreted. Possible ligand of InR/insulin-like receptor. Functionally, plays a role in regulating body size by increasing cell size and cell number of individual organs. Probably mediates its growth effects by acting as a ligand for the insulin receptor and transducing a signal via the Chico/PI3K/Akt(PKB) pathway. The protein is Insulin-like peptide 2 of Drosophila melanogaster (Fruit fly).